The following is a 444-amino-acid chain: Sprouty-related, EVH1 domain-containing protein 1 (444 aa).

S2 bears the N-acetylserine mark. The region spanning A6–I123 is the WH1 domain. Residues I123–L151 form a disordered region. A compositionally biased stretch (acidic residues) spans E135–S147. K224 bears the N6-methyllysine mark. Positions S233–P285 constitute a KBD domain. Residues S238 and S308 each carry the phosphoserine modification. The segment at S333–G444 is required for interaction with TESK1. One can recognise an SPR domain in the interval R334 to A442.

As to quaternary structure, homodimer and heterodimer. Able to interact with SPRED2 to form heterodimers. Interacts (via C-terminus) with TAOK1/MARKK (via C-terminus); the interaction does not affect TAOK1 kinase activity. Interacts (via C-terminus) with TESK1 (via C-terminus); the interaction inhibits TESK1 kinase activity. Interacts with CAV1. Interacts with RAS. Interacts with palmitoyltransferase ZDHHC17/HIP14; the interaction leads to palmitoylation of SPRED1. In terms of processing, palmitoylated by ZDHHC17/HIP14. Post-translationally, phosphorylated on tyrosine. Ubiquitinated. As to expression, weakly expressed in embryonic cell line HEK293.

Its subcellular location is the cell membrane. The protein localises to the membrane. The protein resides in the caveola. It localises to the nucleus. Functionally, tyrosine kinase substrate that inhibits growth-factor-mediated activation of MAP kinase. Negatively regulates hematopoiesis of bone marrow. Inhibits fibroblast growth factor (FGF)-induced retinal lens fiber differentiation, probably by inhibiting FGF-mediated phosphorylation of ERK1/2. Attenuates actin stress fiber formation via inhibition of TESK1-mediated phosphorylation of cofilin. Inhibits TGFB-induced epithelial-to-mesenchymal transition in lens epithelial cells. The polypeptide is Sprouty-related, EVH1 domain-containing protein 1 (SPRED1) (Homo sapiens (Human)).